A 570-amino-acid polypeptide reads, in one-letter code: MVDNTSIATKSALQAAFSSASSLPLLVSSPGAHGQSGGGGGMKLEAVMENLQRQQAARLALEEKLRQAEKEKDIRSMVESQIQQQALAFRHYQAAVRGAFAAGVPNSSSGHPLERRAESDIDDEDDEDDDPELDRGMDDEERDMDEDDSMNEGGGDEDLEGPLAHYPPRHAVYPGAGQSPKSTPIHLSRVQPPYPAPRQAESPSALAPQAQSQHHEWTYEEQFKQLYELDDDEKRKEFLDDLFSFMQKRGTPVNRIPIMAKQVLDLYTLYKLVTEKGGLVEVINKKIWREITKGLNLPTSITSAAFTLRTQYMKYLYPYECEKRGLSSPGELQAAIDSNRREGRRQSYGSTLFNYSPVGTPTLLASPKLQMPHISMPTPNGGHMTQTPGIKKEDSMLSSCLTNRVGIPMSLAGHHSAAQAAAAAAVQAAALEQLREKLESGEPPEKKVMLMAEEQQRIMQHALQQNLFAMATQLPMNIKLNNRDDRQETALNLSTNGISSINMSIEINGVVYTGVLFARKPAIGFMPSSQRVHHQHSSQGKSNSPGLSSHIQPSSSASSSASSHGPATSP.

Residues 102–215 (AGVPNSSSGH…LAPQAQSQHH (114 aa)) are disordered. Over residues 120–160 (DIDDEDDEDDDPELDRGMDDEERDMDEDDSMNEGGGDEDLE) the composition is skewed to acidic residues. S179 is subject to Phosphoserine. Residues 232–324 (DEKRKEFLDD…YLYPYECEKR (93 aa)) enclose the ARID domain. A Phosphoserine modification is found at S356. The region spanning 429-523 (AALEQLREKL…GVLFARKPAI (95 aa)) is the REKLES domain. The tract at residues 430 to 473 (ALEQLREKLESGEPPEKKVMLMAEEQQRIMQHALQQNLFAMATQ) is important for nuclear localization. The homodimerization stretch occupies residues 475–495 (PMNIKLNNRDDRQETALNLST). The important for cytoplasmic localization stretch occupies residues 519–531 (RKPAIGFMPSSQR). The interval 528–570 (SSQRVHHQHSSQGKSNSPGLSSHIQPSSSASSSASSHGPATSP) is disordered. Residues S542 and S569 each carry the phosphoserine modification. Over residues 548–570 (SSHIQPSSSASSSASSHGPATSP) the composition is skewed to low complexity.

In terms of assembly, homodimer.

The protein resides in the nucleus. The protein localises to the cytoplasm. In terms of biological role, transcription factor. The sequence is that of AT-rich interactive domain-containing protein 3A (arid3a) from Danio rerio (Zebrafish).